The following is a 277-amino-acid chain: Thymidylate synthase (277 aa).

Arginine 21 is a dUMP binding site. Histidine 51 serves as a coordination point for (6R)-5,10-methylene-5,6,7,8-tetrahydrofolate. 126–127 lines the dUMP pocket; that stretch reads RR. The Nucleophile role is filled by cysteine 159. DUMP is bound by residues 179–182, asparagine 190, and 220–222; these read RSGD and HLY. A (6R)-5,10-methylene-5,6,7,8-tetrahydrofolate-binding site is contributed by aspartate 182. Residue alanine 276 coordinates (6R)-5,10-methylene-5,6,7,8-tetrahydrofolate.

It belongs to the thymidylate synthase family. Bacterial-type ThyA subfamily. As to quaternary structure, homodimer.

The protein resides in the cytoplasm. It carries out the reaction dUMP + (6R)-5,10-methylene-5,6,7,8-tetrahydrofolate = 7,8-dihydrofolate + dTMP. It functions in the pathway pyrimidine metabolism; dTTP biosynthesis. In terms of biological role, catalyzes the reductive methylation of 2'-deoxyuridine-5'-monophosphate (dUMP) to 2'-deoxythymidine-5'-monophosphate (dTMP) while utilizing 5,10-methylenetetrahydrofolate (mTHF) as the methyl donor and reductant in the reaction, yielding dihydrofolate (DHF) as a by-product. This enzymatic reaction provides an intracellular de novo source of dTMP, an essential precursor for DNA biosynthesis. This is Thymidylate synthase from Alcanivorax borkumensis (strain ATCC 700651 / DSM 11573 / NCIMB 13689 / SK2).